A 438-amino-acid polypeptide reads, in one-letter code: Dol-P-Man:Man(5)GlcNAc(2)-PP-Dol alpha-1,3-mannosyltransferase (438 aa).

Phosphoserine is present on Ser-13. Transmembrane regions (helical) follow at residues 41 to 61, 95 to 115, 123 to 143, 149 to 169, 172 to 192, 203 to 223, 231 to 251, 289 to 309, 332 to 352, 356 to 376, and 407 to 427; these read YTLL…FWVI, TGPL…FYAT, MAQN…FLIY, VPPF…SIFV, LFND…FLAQ, LAVS…FLLL, ALPK…PFLL, FHLA…LCRW, ALTP…GICF, LHYQ…WAMP, and AALH…PESF.

This sequence belongs to the glycosyltransferase ALG3 family.

Its subcellular location is the endoplasmic reticulum membrane. It carries out the reaction an alpha-D-Man-(1-&gt;2)-alpha-D-Man-(1-&gt;2)-alpha-D-Man-(1-&gt;3)-[alpha-D-Man-(1-&gt;6)]-beta-D-Man-(1-&gt;4)-beta-D-GlcNAc-(1-&gt;4)-alpha-D-GlcNAc-diphospho-di-trans,poly-cis-dolichol + a di-trans,poly-cis-dolichyl beta-D-mannosyl phosphate = an alpha-D-Man-(1-&gt;2)-alpha-D-Man-(1-&gt;2)-alpha-D-Man-(1-&gt;3)-[alpha-D-Man-(1-&gt;3)-alpha-D-Man-(1-&gt;6)]-beta-D-Man-(1-&gt;4)-beta-D-GlcNAc-(1-&gt;4)-alpha-D-GlcNAc-diphospho-di-trans,poly-cis-dolichol + a di-trans,poly-cis-dolichyl phosphate + H(+). It functions in the pathway protein modification; protein glycosylation. Dol-P-Man:Man(5)GlcNAc(2)-PP-Dol alpha-1,3-mannosyltransferase that operates in the biosynthetic pathway of dolichol-linked oligosaccharides, the glycan precursors employed in protein asparagine (N)-glycosylation. The assembly of dolichol-linked oligosaccharides begins on the cytosolic side of the endoplasmic reticulum membrane and finishes in its lumen. The sequential addition of sugars to dolichol pyrophosphate produces dolichol-linked oligosaccharides containing fourteen sugars, including two GlcNAcs, nine mannoses and three glucoses. Once assembled, the oligosaccharide is transferred from the lipid to nascent proteins by oligosaccharyltransferases. In the lumen of the endoplasmic reticulum, adds the first dolichyl beta-D-mannosyl phosphate derived mannose in an alpha-1,3 linkage to Man(5)GlcNAc(2)-PP-dolichol to produce Man(6)GlcNAc(2)-PP-dolichol. Man(6)GlcNAc(2)-PP-dolichol is a substrate for ALG9, the following enzyme in the biosynthetic pathway. The chain is Dol-P-Man:Man(5)GlcNAc(2)-PP-Dol alpha-1,3-mannosyltransferase from Mus musculus (Mouse).